We begin with the raw amino-acid sequence, 90 residues long: Large ribosomal subunit protein eL33 (90 aa).

Belongs to the eukaryotic ribosomal protein eL33 family.

This Methanopyrus kandleri (strain AV19 / DSM 6324 / JCM 9639 / NBRC 100938) protein is Large ribosomal subunit protein eL33.